A 433-amino-acid chain; its full sequence is Homogentisate 1,2-dioxygenase (433 aa).

The active-site Proton acceptor is His-288. Residues His-331 and Glu-337 each coordinate Fe cation. Homogentisate contacts are provided by Tyr-346 and His-367. Residue His-367 participates in Fe cation binding.

The protein belongs to the homogentisate dioxygenase family. In terms of assembly, hexamer; dimer of trimers. Fe cation serves as cofactor.

The enzyme catalyses homogentisate + O2 = 4-maleylacetoacetate + H(+). Its pathway is amino-acid degradation; L-phenylalanine degradation; acetoacetate and fumarate from L-phenylalanine: step 4/6. Functionally, involved in the catabolism of homogentisate (2,5-dihydroxyphenylacetate or 2,5-OH-PhAc), a central intermediate in the degradation of phenylalanine and tyrosine. Catalyzes the oxidative ring cleavage of the aromatic ring of homogentisate to yield maleylacetoacetate. In Pseudomonas putida (strain W619), this protein is Homogentisate 1,2-dioxygenase.